A 376-amino-acid chain; its full sequence is Phytanoyl-CoA hydroxylase-interacting protein-like (376 aa).

Phosphoserine is present on residues Ser-12 and Ser-15. N-linked (GlcNAc...) asparagine glycosylation occurs at Asn-23. Position 25 is a phosphoserine (Ser-25). A glycan (N-linked (GlcNAc...) asparagine) is linked at Asn-37. In terms of domain architecture, Fibronectin type-III spans 52–161 (VPHNIKISNI…EIIEFCTADY (110 aa)).

The protein belongs to the PHYHIP family.

In terms of biological role, may play a role in the development of the central system. The polypeptide is Phytanoyl-CoA hydroxylase-interacting protein-like (PHYHIPL) (Homo sapiens (Human)).